Consider the following 185-residue polypeptide: C-type lectin domain family 5 member A (185 aa).

The Cytoplasmic segment spans residues 1-4 (MNWH). Residues 5-27 (MIISGLIVVVLKIVGMTFFLLYF) traverse the membrane as a helical; Signal-anchor for type II membrane protein segment. Over 28–185 (PQIFGEHNVS…YRSICEKSAQ (158 aa)) the chain is Extracellular. N-linked (GlcNAc...) asparagine glycosylation is found at N35 and N55. A disulfide bridge connects residues C68 and C79. One can recognise a C-type lectin domain in the interval 75–181 (HQGRCFFLST…CDVNYRSICE (107 aa)). N-linked (GlcNAc...) asparagine glycosylation is found at N90, N117, N141, and N146. Intrachain disulfides connect C96–C180 and C158–C172.

In terms of assembly, monomer. Homodimer. The majority of CLEC5A is expressed as a monomeric form on macrophages. Interacts with TYROBP/DAP12. The interaction with TYROBP is required for CLEC5 cell surface expression. Interacts with HCST/DAP10. Forms a CLEC5A/TYROBP/HCST trimolecular complex depending almost solely on TYROBP. N-glycosylated. Contains sialic acid residues. As to expression, constitutively expressed in monocytes and macrophages.

The protein resides in the cell membrane. In terms of biological role, functions as a positive regulator of osteoclastogenesis. Cell surface receptor that signals via TYROBP. Regulates inflammatory responses. The polypeptide is C-type lectin domain family 5 member A (CLEC5A) (Sus scrofa (Pig)).